Reading from the N-terminus, the 231-residue chain is MTELNGRVAIITGASSGIGAATAKALEKQGVKVVLAGRSHDKLNTLAKDMNEDNIHIVPTDVTNQVEVDALVAKVIDVFGHVDIFVNCAGVMRSSKITDYQVESWDSMVDTNIKGLLYSLNAILPKFEAQGSGHVVNLASISANEVSKESALYSATKSAVLMIFNGLEKELAKTGIKTTSILPGMVDTPMTERSDFGGRKKLDPENIADAIIYALTQPAHVNVNEVTVRPV.

10 to 34 (IITGASSGIGAATAKALEKQGVKVV) is an NADP(+) binding site. Serine 140 serves as a coordination point for substrate. The active-site Proton acceptor is tyrosine 153.

Belongs to the short-chain dehydrogenases/reductases (SDR) family.

This is an uncharacterized protein from Staphylococcus haemolyticus (strain JCSC1435).